The primary structure comprises 188 residues: Murein DD-endopeptidase MepS/Murein LD-carboxypeptidase (188 aa).

Residues 1 to 26 (MVKSQPILRYILRGIPAIAVAVLLSA) form the signal peptide. Cys27 carries N-palmitoyl cysteine lipidation. The S-diacylglycerol cysteine moiety is linked to residue Cys27. Positions 64 to 185 (VDVKSRIMDQ…KRYNEARRVL (122 aa)) constitute a NlpC/P60 domain. Catalysis depends on Cys94, which acts as the Nucleophile. Residue His145 is the Proton acceptor of the active site. His157 is an active-site residue.

Belongs to the peptidase C40 family. Monomer.

It localises to the cell outer membrane. The catalysed reaction is N-acetyl-D-glucosaminyl-N-acetylmuramoyl-L-alanyl-meso-2,6-diaminoheptanedioyl-D-alanine + H2O = N-acetyl-D-glucosaminyl-N-acetylmuramoyl-L-alanyl-meso-2,6-diaminoheptanedioate + D-alanine. It functions in the pathway cell wall biogenesis; cell wall polysaccharide biosynthesis. Its function is as follows. A murein DD-endopeptidase with specificity for D-Ala-meso-diaminopimelic acid (mDAP) cross-links. Its role is probably to cleave D-Ala-mDAP cross-links to allow insertion of new glycans and thus cell wall expansion. Functionally redundant with MepM and MepH. Also has weak LD-carboxypeptidase activity on L-mDAP-D-Ala peptide bonds. The sequence is that of Murein DD-endopeptidase MepS/Murein LD-carboxypeptidase (mepS) from Escherichia coli O157:H7.